Consider the following 97-residue polypeptide: Ferredoxin-like protein YdiT (97 aa).

This sequence belongs to the bacterial-type ferredoxin family. FixX subfamily.

Could be a 3Fe-4S cluster-containing protein. Probably participates in a redox process with YdiQ, YdiR and YdiS. The protein is Ferredoxin-like protein YdiT (ydiT) of Escherichia coli (strain K12).